The chain runs to 231 residues: MSGTDMNVHKRTAAREAADMVKSGMVVGLGTGSTAAYMIERLGERVAEGLEIFGIPTSDDSEDKALKAGIPLTDFSAHRRIDIAIDGADEVQRGSLNLIKGLGGALLREKIVAQAAKRFVVIVDGTKPVDLLGERAPVPVEVISFGWECTAERLAACGARGVKPRTDRAGSLFVTDTGNMILDCHFGPIEKPEELAEKIDRIVGVVEHGMFLNMASEVLVATPDGVEHWEP.

Substrate-binding positions include 31–34 (TGST), 86–89 (DGAD), and 100–103 (KGLG). The Proton acceptor role is filled by glutamate 109. Position 127 (lysine 127) interacts with substrate.

The protein belongs to the ribose 5-phosphate isomerase family. Homodimer.

The catalysed reaction is aldehydo-D-ribose 5-phosphate = D-ribulose 5-phosphate. It participates in carbohydrate degradation; pentose phosphate pathway; D-ribose 5-phosphate from D-ribulose 5-phosphate (non-oxidative stage): step 1/1. Catalyzes the reversible conversion of ribose-5-phosphate to ribulose 5-phosphate. The sequence is that of Ribose-5-phosphate isomerase A from Gluconobacter oxydans (strain 621H) (Gluconobacter suboxydans).